The following is a 377-amino-acid chain: Transcription factor ast-1 (377 aa).

The interval 72 to 143 (PNRMLYNDNT…SNGSSSSTES (72 aa)) is disordered. Composition is skewed to low complexity over residues 96-109 (STSA…TSSK) and 118-142 (TESS…SSTE). The ETS DNA-binding region spans 214–294 (TQLWQFLLEL…HGKRYAYKFD (81 aa)).

Belongs to the ETS family. In terms of tissue distribution, expressed in the A-neurons in the male-specific genital sensilla (simple sense organs) known as rays.

Its subcellular location is the nucleus. The protein resides in the cell projection. It localises to the neuron projection. Its function is as follows. Transcription factor. Probably binds to DNA sequences containing the consensus motif 5'-CGGA[AT][AG]-3'. Positively modulates expression of dopamine pathway genes, acting as a terminal selector for differentiation of dopaminergic neurons; may act in concert with homeobox proteins ceh-40, ceh-43 and ceh-20. Required for axon navigation in some interneurons, perhaps acting in the same pathways as basement membrane protein nid-1 and unc-6/netrin. Plays a role in the differentiation of the ventral cord pioneer neuron AVG. Required for morphogenesis of the pharynx. The polypeptide is Transcription factor ast-1 (Caenorhabditis elegans).